The primary structure comprises 389 residues: COP9 signalosome complex subunit 11 (389 aa).

One can recognise a PCI domain in the interval 143-312; sequence QLIIDIPNLV…ILYQKFDPQM (170 aa).

Component of a COP9 signalosome-like (CSN) complex.

It is found in the cytoplasm. The protein localises to the nucleus. Functionally, component of the COP9 signalosome (CSN) complex that acts as an regulator of the ubiquitin (Ubl) conjugation pathway by mediating the deneddylation of the cullin subunit of SCF-type E3 ubiquitin-protein ligase complexes The CSN complex is involved in the regulation of the mating pheromone response. PCI8 may also be involved in transcriptional and translational control. This Kluyveromyces lactis (strain ATCC 8585 / CBS 2359 / DSM 70799 / NBRC 1267 / NRRL Y-1140 / WM37) (Yeast) protein is COP9 signalosome complex subunit 11 (PCI8).